The following is a 92-amino-acid chain: Small ribosomal subunit protein bS20 (92 aa).

It belongs to the bacterial ribosomal protein bS20 family.

Its function is as follows. Binds directly to 16S ribosomal RNA. The sequence is that of Small ribosomal subunit protein bS20 from Thermosipho africanus (strain TCF52B).